The following is a 275-amino-acid chain: Large ribosomal subunit protein uL2cz (275 aa).

Disordered stretches follow at residues 1-22 (MAIH…DSQV) and 226-275 (NPVD…RRRK).

The protein belongs to the universal ribosomal protein uL2 family. As to quaternary structure, part of the 50S ribosomal subunit.

The protein resides in the plastid. It is found in the chloroplast. In Chloranthus spicatus (Chulantree), this protein is Large ribosomal subunit protein uL2cz (rpl2-A).